A 66-amino-acid polypeptide reads, in one-letter code: Large ribosomal subunit protein bL33c (66 aa).

This sequence belongs to the bacterial ribosomal protein bL33 family.

It is found in the plastid. The protein resides in the chloroplast. This chain is Large ribosomal subunit protein bL33c, found in Crucihimalaya wallichii (Rock-cress).